The sequence spans 585 residues: Pyruvate kinase (585 aa).

Arg-32 lines the substrate pocket. The K(+) site is built by Asn-34, Ser-36, Asp-66, and Thr-67. 34–37 (NFSH) is a binding site for ATP. The ATP site is built by Arg-73 and Lys-156. Glu-221 is a binding site for Mg(2+). Residues Gly-244, Asp-245, and Thr-277 each contribute to the substrate site. Residue Asp-245 coordinates Mg(2+).

It belongs to the pyruvate kinase family. In the C-terminal section; belongs to the PEP-utilizing enzyme family. Requires Mg(2+) as cofactor. It depends on K(+) as a cofactor.

It catalyses the reaction pyruvate + ATP = phosphoenolpyruvate + ADP + H(+). Its pathway is carbohydrate degradation; glycolysis; pyruvate from D-glyceraldehyde 3-phosphate: step 5/5. The chain is Pyruvate kinase (pyk) from Staphylococcus aureus (strain USA300).